The sequence spans 46 residues: U-limacoditoxin(6)-Dv61 (46 aa).

The N-terminal stretch at 1–19 is a signal peptide; the sequence is MSKLLVLLMTTALATLAQA.

This sequence belongs to the limacoditoxin-6 family. Expressed by the venom secretory cell of the spine. The spine is a cuticular structure containing a single large nucleated venom-secreting cell at its base. It is an independent unit capable of producing, storing and injecting venom. On the back of D.vulnerans caterpillars, spines are grouped together by 50 to 100 to form scoli, of which there are eight in D.vulnerans.

Its subcellular location is the secreted. Probable toxin. Does not show insecticidal, antimicrobial and antiparasitic activities. Does not induce increase in intracellular calcium in mouse DRG neurons, suggesting that it does not induce pain. The chain is U-limacoditoxin(6)-Dv61 from Doratifera vulnerans (Mottled cup moth).